Consider the following 498-residue polypeptide: ATP synthase subunit beta, chloroplastic (498 aa).

Residue 172 to 179 coordinates ATP; the sequence is GGAGVGKT.

It belongs to the ATPase alpha/beta chains family. In terms of assembly, F-type ATPases have 2 components, CF(1) - the catalytic core - and CF(0) - the membrane proton channel. CF(1) has five subunits: alpha(3), beta(3), gamma(1), delta(1), epsilon(1). CF(0) has four main subunits: a(1), b(1), b'(1) and c(9-12).

The protein resides in the plastid. Its subcellular location is the chloroplast thylakoid membrane. It carries out the reaction ATP + H2O + 4 H(+)(in) = ADP + phosphate + 5 H(+)(out). Functionally, produces ATP from ADP in the presence of a proton gradient across the membrane. The catalytic sites are hosted primarily by the beta subunits. The protein is ATP synthase subunit beta, chloroplastic of Nandina domestica (Heavenly bamboo).